The primary structure comprises 131 residues: MVTLYTSPSCTSCRKARAWLEEHNIPFTERNIFSEPLSLDEIKEILRMTEDGTDEIISTRSKVFQKLDVNIDQLPMKNLFNLIQKNPGLLRRPIILDEKRLQVGYNEDEIRRFLPRTVRTFQLREAQRMVN.

Cysteines 10 and 13 form a disulfide.

The protein belongs to the ArsC family. Spx subfamily. Interacts with the C-terminal domain of the alpha subunit of the RNAP.

It is found in the cytoplasm. Its function is as follows. Global transcriptional regulator that plays a key role in stress response and exerts either positive or negative regulation of genes. Acts by interacting with the C-terminal domain of the alpha subunit of the RNA polymerase (RNAP). This interaction can enhance binding of RNAP to the promoter region of target genes and stimulate their transcription, or block interaction of RNAP with activator. This chain is Global transcriptional regulator Spx 1, found in Oceanobacillus iheyensis (strain DSM 14371 / CIP 107618 / JCM 11309 / KCTC 3954 / HTE831).